The following is a 128-amino-acid chain: DELTA-urthionin-Uf1a (128 aa).

The N-terminal stretch at 1–24 (MEGKTVIVSLLLLSIVVGQIQVEA) is a signal peptide. 3 cysteine pairs are disulfide-bonded: Cys27/Cys64, Cys28/Cys56, and Cys40/Cys50. Positions 67–128 (LSIPEVTGEA…LCTKNSIETA (62 aa)) are cleaved as a propeptide — acidic domain.

The protein belongs to the plant thionin (TC 1.C.44) family. Expressed in trichomes, that are stiff epidermal hairs located on the surface of petioles and leaves.

The protein resides in the secreted. Plant defense protein that causes pain by probable disruption of cell membranes. Shows cytotoxic activity against the neuroblastoma cell line SH-SY5Y and slightly weaker activity against several non-neuronal cell lines. In vivo, intraplantar injection into mice causes several nocifensive responses, along with swelling and redness. The protein is DELTA-urthionin-Uf1a of Urtica ferox (Tree nettle).